The following is a 365-amino-acid chain: Aminomethyltransferase (365 aa).

It belongs to the GcvT family. In terms of assembly, the glycine cleavage system is composed of four proteins: P, T, L and H.

It carries out the reaction N(6)-[(R)-S(8)-aminomethyldihydrolipoyl]-L-lysyl-[protein] + (6S)-5,6,7,8-tetrahydrofolate = N(6)-[(R)-dihydrolipoyl]-L-lysyl-[protein] + (6R)-5,10-methylene-5,6,7,8-tetrahydrofolate + NH4(+). Functionally, the glycine cleavage system catalyzes the degradation of glycine. The chain is Aminomethyltransferase from Chlorobium phaeobacteroides (strain DSM 266 / SMG 266 / 2430).